Reading from the N-terminus, the 258-residue chain is Casein kinase II subunit beta' (258 aa).

The segment covering 1 to 10 has biased composition (polar residues); it reads MGSRSENVGT. A disordered region spans residues 1–29; sequence MGSRSENVGTVTREGSRVEQDDVLMDDDS.

Belongs to the casein kinase 2 subunit beta family. Tetramer composed of an alpha subunit, an alpha' subunit, one beta subunit and one beta' subunit. Interacts with FACT subunits POB3 and SPT16. Interaction with YTA7. In terms of processing, phosphorylated by alpha subunit. The N-terminus is blocked.

In terms of biological role, regulatory subunit of casein kinase II/CK2. As part of the kinase complex regulates the basal catalytic activity of the alpha subunit a constitutively active serine/threonine-protein kinase that phosphorylates a large number of substrates containing acidic residues C-terminal to the phosphorylated serine or threonine. The polypeptide is Casein kinase II subunit beta' (Saccharomyces cerevisiae (strain ATCC 204508 / S288c) (Baker's yeast)).